The primary structure comprises 274 residues: Pyrroline-5-carboxylate reductase 3 (274 aa).

A2 carries the post-translational modification N-acetylalanine.

The protein belongs to the pyrroline-5-carboxylate reductase family. In terms of assembly, homodecamer; composed of 5 homodimers.

The protein localises to the cytoplasm. The catalysed reaction is L-proline + NADP(+) = (S)-1-pyrroline-5-carboxylate + NADPH + 2 H(+). It catalyses the reaction L-proline + NAD(+) = (S)-1-pyrroline-5-carboxylate + NADH + 2 H(+). It functions in the pathway amino-acid biosynthesis; L-proline biosynthesis; L-proline from L-glutamate 5-semialdehyde: step 1/1. Its function is as follows. Oxidoreductase that catalyzes the last step in proline biosynthesis, which corresponds to the reduction of pyrroline-5-carboxylate (P5C) to L-proline using NAD(P)H. Proline is synthesized from either glutamate or ornithine; both are converted to P5C, and then to proline via pyrroline-5-carboxylate reductases (PYCRs). PYCR3 is exclusively linked to the biosynthesis of proline from ornithine. The polypeptide is Pyrroline-5-carboxylate reductase 3 (Rattus norvegicus (Rat)).